A 272-amino-acid chain; its full sequence is Hydroxyethylthiazole kinase (272 aa).

Position 45 (Met45) interacts with substrate. Arg121 and Thr168 together coordinate ATP. Gly195 provides a ligand contact to substrate.

The protein belongs to the Thz kinase family. Homotrimer. It depends on Mg(2+) as a cofactor.

It catalyses the reaction 5-(2-hydroxyethyl)-4-methylthiazole + ATP = 4-methyl-5-(2-phosphooxyethyl)-thiazole + ADP + H(+). Its pathway is cofactor biosynthesis; thiamine diphosphate biosynthesis; 4-methyl-5-(2-phosphoethyl)-thiazole from 5-(2-hydroxyethyl)-4-methylthiazole: step 1/1. Its function is as follows. Catalyzes the phosphorylation of the hydroxyl group of 4-methyl-5-beta-hydroxyethylthiazole (THZ). In Bacillus subtilis (strain 168), this protein is Hydroxyethylthiazole kinase.